The primary structure comprises 180 residues: MLTRAQKEQLVKELSEVFKNSSLILFSDYKGLNVAQITDLRKKLREKLADGARYKVIKNSVAYLALKEAGYNVEEIEDVFSGPLAILYVEDGDPIEAIKVIYDFSKEMKGIPSFKGLYLDGKFFSADEVENLSKLPSKEQLLAMVVSGVQGPIRGLVNVLSGTLKNLLYALNAIKDKKSE.

The protein belongs to the universal ribosomal protein uL10 family. Part of the ribosomal stalk of the 50S ribosomal subunit. The N-terminus interacts with L11 and the large rRNA to form the base of the stalk. The C-terminus forms an elongated spine to which L12 dimers bind in a sequential fashion forming a multimeric L10(L12)X complex.

In terms of biological role, forms part of the ribosomal stalk, playing a central role in the interaction of the ribosome with GTP-bound translation factors. The polypeptide is Large ribosomal subunit protein uL10 (Thermosipho africanus (strain TCF52B)).